Here is a 288-residue protein sequence, read N- to C-terminus: Polyamine aminopropyltransferase (288 aa).

The PABS domain occupies 9–238 (ETLHDQFGQY…GIMTFAWATD (230 aa)). Glutamine 33 contacts S-methyl-5'-thioadenosine. Spermidine-binding residues include histidine 64 and aspartate 88. Residues glutamate 108 and 140–141 (DG) each bind S-methyl-5'-thioadenosine. Aspartate 158 acts as the Proton acceptor in catalysis. 158-161 (DCTD) serves as a coordination point for spermidine. Proline 165 provides a ligand contact to S-methyl-5'-thioadenosine.

Belongs to the spermidine/spermine synthase family. In terms of assembly, homodimer or homotetramer.

It localises to the cytoplasm. The enzyme catalyses S-adenosyl 3-(methylsulfanyl)propylamine + putrescine = S-methyl-5'-thioadenosine + spermidine + H(+). Its pathway is amine and polyamine biosynthesis; spermidine biosynthesis; spermidine from putrescine: step 1/1. Its function is as follows. Catalyzes the irreversible transfer of a propylamine group from the amino donor S-adenosylmethioninamine (decarboxy-AdoMet) to putrescine (1,4-diaminobutane) to yield spermidine. The sequence is that of Polyamine aminopropyltransferase from Shigella sonnei (strain Ss046).